The primary structure comprises 255 residues: Ditrans,polycis-undecaprenyl-diphosphate synthase ((2E,6E)-farnesyl-diphosphate specific) (255 aa).

Aspartate 21 is a catalytic residue. Residue aspartate 21 coordinates Mg(2+). Substrate-binding positions include 22–25 (GNGR), tryptophan 26, arginine 34, histidine 38, and 66–68 (SSE). Asparagine 69 functions as the Proton acceptor in the catalytic mechanism. Substrate is bound by residues tryptophan 70, arginine 72, arginine 189, and 195–197 (RIS). Glutamate 208 provides a ligand contact to Mg(2+).

The protein belongs to the UPP synthase family. Homodimer. Mg(2+) is required as a cofactor.

The catalysed reaction is 8 isopentenyl diphosphate + (2E,6E)-farnesyl diphosphate = di-trans,octa-cis-undecaprenyl diphosphate + 8 diphosphate. Functionally, catalyzes the sequential condensation of isopentenyl diphosphate (IPP) with (2E,6E)-farnesyl diphosphate (E,E-FPP) to yield (2Z,6Z,10Z,14Z,18Z,22Z,26Z,30Z,34E,38E)-undecaprenyl diphosphate (di-trans,octa-cis-UPP). UPP is the precursor of glycosyl carrier lipid in the biosynthesis of bacterial cell wall polysaccharide components such as peptidoglycan and lipopolysaccharide. This Xylella fastidiosa (strain Temecula1 / ATCC 700964) protein is Ditrans,polycis-undecaprenyl-diphosphate synthase ((2E,6E)-farnesyl-diphosphate specific).